A 212-amino-acid polypeptide reads, in one-letter code: Ribosomal RNA small subunit methyltransferase G (212 aa).

S-adenosyl-L-methionine is bound by residues glycine 73, phenylalanine 78, 124-125, and arginine 137; that span reads IE.

Belongs to the methyltransferase superfamily. RNA methyltransferase RsmG family.

It is found in the cytoplasm. Its function is as follows. Specifically methylates the N7 position of a guanine in 16S rRNA. The polypeptide is Ribosomal RNA small subunit methyltransferase G (Karelsulcia muelleri (strain GWSS) (Sulcia muelleri)).